The primary structure comprises 1545 residues: Tricalbin-3 (1545 aa).

The interval 1–89 (MTGIKAQVHP…SNPEGKKQSS (89 aa)) is disordered. Over 1 to 206 (MTGIKAQVHP…AYILENFYND (206 aa)) the chain is Cytoplasmic. A compositionally biased stretch (polar residues) spans 62–80 (TKTSNSVSDVSKGQKTADS). Phosphoserine is present on residues serine 67 and serine 112. A helical membrane pass occupies residues 207 to 227 (WYCNIATVLGTCFFSWLFAYI). A topological domain (extracellular) is located at residue glycine 228. A helical membrane pass occupies residues 229–249 (FSWWSMIFIFLGTATVYNAEY). Topologically, residues 250–1545 (TRFNRNIRDD…VPEVPQEYTQ (1296 aa)) are cytoplasmic. Positions 272 to 479 (RVESTTWLNS…PPNHLDINVE (208 aa)) constitute an SMP-LTD domain. In terms of domain architecture, C2 1 spans 470–596 (PPNHLDINVE…LQNPVLDNQT (127 aa)). Residues 620 to 660 (EDKSEEKAVERAEAKAKGKKEDENEDTTEKEEDENEESSQT) adopt a coiled-coil conformation. The segment covering 624 to 641 (EEKAVERAEAKAKGKKED) has biased composition (basic and acidic residues). The segment at 624–660 (EEKAVERAEAKAKGKKEDENEDTTEKEEDENEESSQT) is disordered. The span at 642–658 (ENEDTTEKEEDENEESS) shows a compositional bias: acidic residues. C2 domains follow at residues 646-763 (TTEK…AQEF) and 783-897 (MTGA…SGKY). Positions 937 to 972 (SPEELVNVEKLEKELKEKKKKFEATQEENEQEMEKN) form a coiled coil. Residues 1119-1234 (PTSVKLPSSE…EVGKTYNWNL (116 aa)) enclose the C2 4 domain. The Ca(2+) site is built by aspartate 1150, aspartate 1156, aspartate 1204, aspartate 1206, and aspartate 1212. Positions 1304–1404 (LLKSLGGNPM…NSRGHSRASS (101 aa)) are disordered. Residues 1318-1328 (SSNGNESNGAK) are compositionally biased toward polar residues. Basic and acidic residues predominate over residues 1329-1340 (KSSEKKSFDRRS). A phosphoserine mark is found at serine 1340, serine 1342, and serine 1346. Over residues 1341-1351 (PSNLNSTSVTP) the composition is skewed to polar residues. Position 1350 is a phosphothreonine (threonine 1350). Serine 1354 bears the Phosphoserine mark. Residues 1361–1373 (VPNTSYAPVQSAS) are compositionally biased toward polar residues. A compositionally biased stretch (low complexity) spans 1377–1404 (KPTDNTSSSSNKKDTPSSNSRGHSRASS). Residues 1396–1514 (SRGHSRASSF…QQDGQISVKL (119 aa)) enclose the C2 5 domain. The residue at position 1400 (serine 1400) is a Phosphoserine.

The protein belongs to the tricalbin family. As to quaternary structure, interacts with TCB2 via its C-terminal domain. Requires Ca(2+) as cofactor.

It localises to the cell membrane. It is found in the endoplasmic reticulum membrane. In terms of biological role, may play a role in membrane trafficking. The protein is Tricalbin-3 (TCB3) of Saccharomyces cerevisiae (strain ATCC 204508 / S288c) (Baker's yeast).